A 265-amino-acid chain; its full sequence is S-antigen protein (265 aa).

The first 23 residues, 1 to 23, serve as a signal peptide directing secretion; sequence MNRILSVTFYLFFIYLYIYETYG. Residues 59–265 form a disordered region; it reads DLQAEGEGEN…SIKNIMNMFI (207 aa). The span at 60–86 shows a compositional bias: acidic residues; it reads LQAEGEGENDKEEDSNNEEMNIDEENG. 12 consecutive repeat copies span residues 97 to 107, 108 to 118, 119 to 129, 130 to 140, 141 to 151, 152 to 162, 163 to 173, 174 to 184, 185 to 195, 196 to 206, 207 to 217, and 218 to 228. The segment at 97-239 is 13 X 11 AA approximate tandem repeats of P-A-K-A-S-Q-G-G-L-E-D; that stretch reads PAKASQGGLE…AKASQGGAEG (143 aa). A 13; approximate repeat occupies 229–239; sequence PAKASQGGAEG. Residues 239–257 show a composition bias toward basic and acidic residues; the sequence is GHGKHAPNKENKNKNKESI.

The protein localises to the parasitophorous vacuole. Functionally, s antigens are soluble heat-stable proteins present in the sera of some infected individuals. This is S-antigen protein from Plasmodium falciparum (isolate FC27 / Papua New Guinea).